A 94-amino-acid polypeptide reads, in one-letter code: Ammonia regulation of amino acid uptake protein (94 aa).

2 repeats span residues 48–57 and 58–67; these read HHQIRRRTHQ.

Its function is as follows. Involved in ammonia regulation of the GAP1 permease. The chain is Ammonia regulation of amino acid uptake protein (AUA1) from Saccharomyces cerevisiae (strain ATCC 204508 / S288c) (Baker's yeast).